The following is a 157-amino-acid chain: Protein Smg homolog (157 aa).

The protein belongs to the Smg family.

This Shewanella putrefaciens (strain CN-32 / ATCC BAA-453) protein is Protein Smg homolog.